A 1813-amino-acid chain; its full sequence is MRAPTTARCSGCIQRVRWRGFLPLVLAVLMGTSHAQRDSIGRYEPASRDANRLWHPVGSHPAAAAAKVYSLFREPDAPVPGLSPSEWNQPAQGNPGWLAEAEARRPPRTQQLRRVQPPVQTRRSHPRGQQQIAARAAPSVARLETPQRPAAARRGRLTGRNVCGGQCCPGWTTSNSTNHCIKPVCQPPCQNRGSCSRPQVCICRSGFRGARCEEVIPEEEFDPQNARPVPRRSVERAPGPHRSSEARGSLVTRIQPLVPPPSPPPSRRLSQPWPLQQHSGPSRTVRRYPATGANGQLMSNALPSGLELRDSSPQAAHVNHLSPPWGLNLTEKIKKIKVVFTPTICKQTCARGRCANSCEKGDTTTLYSQGGHGHDPKSGFRIYFCQIPCLNGGRCIGRDECWCPANSTGKFCHLPVPQPDREPAGRGSRHRTLLEGPLKQSTFTLPLSNQLASVNPSLVKVQIHHPPEASVQIHQVARVRGELDPVLEDNSVETRASHRPHGNLGHSPWASNSIPARAGEAPRPPPVLSRHYGLLGQCYLSTVNGQCANPLGSLTSQEDCCGSVGTFWGVTSCAPCPPRQEGPAFPVIENGQLECPQGYKRLNLSHCQDINECLTLGLCKDSECVNTRGSYLCTCRPGLMLDPSRSRCVSDKAVSMQQGLCYRSLGSGTCTLPLVHRITKQICCCSRVGKAWGSTCEQCPLPGTEAFREICPAGHGYTYSSSDIRLSMRKAEEEELASPLREQTEQSTAPPPGQAERQPLRAATATWIEAETLPDKGDSRAVQITTSAPHLPARVPGDATGRPAPSLPGQGIPESPAEEQVIPSSDVLVTHSPPDFDPCFAGASNICGPGTCVSLPNGYRCVCSPGYQLHPSQDYCTDDNECMRNPCEGRGRCVNSVGSYSCLCYPGYTLVTLGDTQECQDIDECEQPGVCSGGRCSNTEGSYHCECDRGYIMVRKGHCQDINECRHPGTCPDGRCVNSPGSYTCLACEEGYVGQSGSCVDVNECLTPGICTHGRCINMEGSFRCSCEPGYEVTPDKKGCRDVDECASRASCPTGLCLNTEGSFTCSACQSGYWVNEDGTACEDLDECAFPGVCPTGVCTNTVGSFSCKDCDQGYRPNPLGNRCEDVDECEGPQSSCRGGECKNTEGSYQCLCHQGFQLVNGTMCEDVNECVGEEHCAPHGECLNSLGSFFCLCAPGFASAEGGTRCQDVDECAATDPCPGGHCVNTEGSFSCLCETASFQPSPDSGECLDIDECEDREDPVCGAWRCENSPGSYRCILDCQPGFYVAPNGDCIDIDECANDTVCGNHGFCDNTDGSFRCLCDQGFETSPSGWECVDVNECELMMAVCGDALCENVEGSFLCLCASDLEEYDAEEGHCRPRVAGAQRIPEVRTEDQAPSLIRMECYSEHNGGPPCSQILGQNSTQAECCCTQGARWGKACAPCPSEDSVEFSQLCPSGQGYIPVEGAWTFGQTMYTDADECVLFGPALCQNGRCSNIVPGYICLCNPGYHYDASSRKCQDHNECQDLACENGECVNQEGSFHCLCNPPLTLDLSGQRCVNTTSSTEDFPDHDIHMDICWKKVTNDVCSQPLRGHHTTYTECCCQDGEAWSQQCALCPPRSSEVYAQLCNVARIEAERGAGIHFRPGYEYGPGLDDLPENLYGPDGAPFYNYLGPEDTAPEPPFSNPASQPGDNTPVLEPPLQPSELQPHYLASHSEPPASFEGLQAEECGILNGCENGRCVRVREGYTCDCFEGFQLDAPTLACVDVNECEDLNGPARLCAHGHCENTEGSYRCHCSPGYVAEPGPPHCAAKE.

The first 35 residues, 1-35 (MRAPTTARCSGCIQRVRWRGFLPLVLAVLMGTSHA), serve as a signal peptide directing secretion. Positions 94–115 (NPGWLAEAEARRPPRTQQLRRV) are heparin-binding. The disordered stretch occupies residues 103–152 (ARRPPRTQQLRRVQPPVQTRRSHPRGQQQIAARAAPSVARLETPQRPAAA). Residues 108–132 (RTQQLRRVQPPVQTRRSHPRGQQQI) are compositionally biased toward polar residues. N-linked (GlcNAc...) asparagine glycosylation occurs at Asn175. One can recognise an EGF-like 1 domain in the interval 181–213 (IKPVCQPPCQNRGSCSRPQVCICRSGFRGARCE). Intrachain disulfides connect Cys185–Cys195, Cys189–Cys201, and Cys203–Cys212. The interval 220 to 305 (EFDPQNARPV…QLMSNALPSG (86 aa)) is disordered. A heparin-binding region spans residues 226-243 (ARPVPRRSVERAPGPHRS). Residues 257-266 (LVPPPSPPPS) are compositionally biased toward pro residues. The span at 293–302 (ANGQLMSNAL) shows a compositional bias: polar residues. Asn328 carries an N-linked (GlcNAc...) asparagine glycan. 329–339 (LTEKIKKIKVV) contributes to the heparin binding site. The region spanning 381–413 (RIYFCQIPCLNGGRCIGRDECWCPANSTGKFCH) is the EGF-like 2 domain. 3 disulfide bridges follow: Cys385-Cys395, Cys389-Cys401, and Cys403-Cys412. An N-linked (GlcNAc...) asparagine glycan is attached at Asn406. Ser491 carries the post-translational modification Phosphoserine. The tract at residues 492 to 524 (VETRASHRPHGNLGHSPWASNSIPARAGEAPRP) is disordered. The region spanning 536-588 (GQCYLSTVNGQCANPLGSLTSQEDCCGSVGTFWGVTSCAPCPPRQEGPAFPVI) is the TB 1 domain. 3 disulfide bridges follow: Cys538-Cys560, Cys547-Cys573, and Cys561-Cys576. A glycan (N-linked (GlcNAc...) asparagine) is linked at Asn603. Positions 609–649 (DINECLTLGLCKDSECVNTRGSYLCTCRPGLMLDPSRSRCV) constitute an EGF-like 3; calcium-binding domain. 7 disulfide bridges follow: Cys613-Cys624, Cys619-Cys633, Cys635-Cys648, Cys661-Cys683, Cys670-Cys696, Cys684-Cys699, and Cys685-Cys711. The 53-residue stretch at 659–711 (GLCYRSLGSGTCTLPLVHRITKQICCCSRVGKAWGSTCEQCPLPGTEAFREIC) folds into the TB 2 domain. Disordered regions lie at residues 730 to 761 (KAEE…QPLR) and 787 to 819 (SAPH…PAEE). In terms of domain architecture, EGF-like 4 spans 835–877 (DFDPCFAGASNICGPGTCVSLPNGYRCVCSPGYQLHPSQDYCT). Disulfide bonds link Cys839–Cys852, Cys847–Cys861, Cys863–Cys876, Cys882–Cys893, Cys887–Cys902, Cys904–Cys919, Cys925–Cys936, Cys931–Cys945, Cys947–Cys959, Cys965–Cys976, Cys971–Cys985, Cys988–Cys999, Cys1005–Cys1016, Cys1011–Cys1025, Cys1027–Cys1040, Cys1046–Cys1057, Cys1052–Cys1066, Cys1069–Cys1082, Cys1088–Cys1099, Cys1094–Cys1108, Cys1111–Cys1124, Cys1130–Cys1142, Cys1137–Cys1151, Cys1153–Cys1165, Cys1171–Cys1183, Cys1177–Cys1192, Cys1194–Cys1207, Cys1213–Cys1224, Cys1219–Cys1233, Cys1235–Cys1249, Cys1255–Cys1268, Cys1263–Cys1277, Cys1281–Cys1293, Cys1299–Cys1311, Cys1305–Cys1320, Cys1322–Cys1335, Cys1341–Cys1353, Cys1348–Cys1362, Cys1364–Cys1378, Cys1405–Cys1428, Cys1415–Cys1440, Cys1429–Cys1443, Cys1430–Cys1455, Cys1481–Cys1494, Cys1489–Cys1503, Cys1505–Cys1518, Cys1524–Cys1534, Cys1529–Cys1543, and Cys1545–Cys1558. The region spanning 878-920 (DDNECMRNPCEGRGRCVNSVGSYSCLCYPGYTLVTLGDTQECQ) is the EGF-like 5; calcium-binding domain. One can recognise an EGF-like 6; calcium-binding domain in the interval 921 to 960 (DIDECEQPGVCSGGRCSNTEGSYHCECDRGYIMVRKGHCQ). The EGF-like 7; calcium-binding domain maps to 961–1000 (DINECRHPGTCPDGRCVNSPGSYTCLACEEGYVGQSGSCV). An EGF-like 8; calcium-binding domain is found at 1001–1041 (DVNECLTPGICTHGRCINMEGSFRCSCEPGYEVTPDKKGCR). Residues 1042 to 1083 (DVDECASRASCPTGLCLNTEGSFTCSACQSGYWVNEDGTACE) form the EGF-like 9; calcium-binding domain. The 42-residue stretch at 1084–1125 (DLDECAFPGVCPTGVCTNTVGSFSCKDCDQGYRPNPLGNRCE) folds into the EGF-like 10; calcium-binding domain. The EGF-like 11; calcium-binding domain maps to 1126–1166 (DVDECEGPQSSCRGGECKNTEGSYQCLCHQGFQLVNGTMCE). N-linked (GlcNAc...) asparagine glycosylation is present at Asn1161. The EGF-like 12; calcium-binding domain maps to 1167–1208 (DVNECVGEEHCAPHGECLNSLGSFFCLCAPGFASAEGGTRCQ). The region spanning 1209–1250 (DVDECAATDPCPGGHCVNTEGSFSCLCETASFQPSPDSGECL) is the EGF-like 13; calcium-binding domain. One can recognise an EGF-like 14; calcium-binding domain in the interval 1251 to 1294 (DIDECEDREDPVCGAWRCENSPGSYRCILDCQPGFYVAPNGDCI). The EGF-like 15; calcium-binding domain maps to 1295–1336 (DIDECANDTVCGNHGFCDNTDGSFRCLCDQGFETSPSGWECV). The N-linked (GlcNAc...) asparagine glycan is linked to Asn1301. Residues 1337–1379 (DVNECELMMAVCGDALCENVEGSFLCLCASDLEEYDAEEGHCR) enclose the EGF-like 16; calcium-binding domain. The TB 3 domain occupies 1403–1455 (MECYSEHNGGPPCSQILGQNSTQAECCCTQGARWGKACAPCPSEDSVEFSQLC). Asn1422 carries an N-linked (GlcNAc...) asparagine glycan. An EGF-like 17; calcium-binding domain is found at 1477-1519 (DADECVLFGPALCQNGRCSNIVPGYICLCNPGYHYDASSRKCQ). Residues 1520 to 1559 (DHNECQDLACENGECVNQEGSFHCLCNPPLTLDLSGQRCV) enclose the EGF-like 18; calcium-binding domain. A glycan (N-linked (GlcNAc...) asparagine) is linked at Asn1560. Positions 1576–1628 (DICWKKVTNDVCSQPLRGHHTTYTECCCQDGEAWSQQCALCPPRSSEVYAQLC) constitute a TB 4 domain. 4 disulfides stabilise this stretch: Cys1578–Cys1601, Cys1587–Cys1613, Cys1602–Cys1616, and Cys1603–Cys1628. The segment at 1631–1813 (ARIEAERGAG…PGPPHCAAKE (183 aa)) is C-terminal domain. The tract at residues 1671–1717 (YLGPEDTAPEPPFSNPASQPGDNTPVLEPPLQPSELQPHYLASHSEP) is disordered. The 41-residue stretch at 1725–1765 (QAEECGILNGCENGRCVRVREGYTCDCFEGFQLDAPTLACV) folds into the EGF-like 19; calcium-binding domain. 6 disulfide bridges follow: Cys1729-Cys1740, Cys1735-Cys1749, Cys1751-Cys1764, Cys1770-Cys1785, Cys1780-Cys1794, and Cys1796-Cys1809. One can recognise an EGF-like 20; calcium-binding domain in the interval 1766-1810 (DVNECEDLNGPARLCAHGHCENTEGSYRCHCSPGYVAEPGPPHCA).

It belongs to the LTBP family. In terms of assembly, forms part of the large latent transforming growth factor beta precursor complex; removal is essential for activation of complex. Interacts with SDC4. Interacts (via C-terminal domain) with FBN1 (via N-terminal domain) in a Ca(+2)-dependent manner. Post-translationally, N-Glycosylated. In terms of processing, contains hydroxylated asparagine residues. Expressed in the anterior chamber of the eye.

The protein resides in the secreted. The protein localises to the extracellular space. It is found in the extracellular matrix. Its function is as follows. May play an integral structural role in elastic-fiber architectural organization and/or assembly. The polypeptide is Latent-transforming growth factor beta-binding protein 2 (Ltbp2) (Mus musculus (Mouse)).